A 393-amino-acid chain; its full sequence is Putative cytochrome P450 143 (393 aa).

Heme is bound at residue cysteine 342.

This sequence belongs to the cytochrome P450 family. Heme is required as a cofactor.

This Mycobacterium bovis (strain ATCC BAA-935 / AF2122/97) protein is Putative cytochrome P450 143 (cyp143).